Reading from the N-terminus, the 197-residue chain is Isochorismatase domain-containing protein 2 (197 aa).

Belongs to the isochorismatase family.

The protein is Isochorismatase domain-containing protein 2 (isoc2) of Danio rerio (Zebrafish).